Reading from the N-terminus, the 565-residue chain is Proline--tRNA ligase (565 aa).

It belongs to the class-II aminoacyl-tRNA synthetase family. ProS type 1 subfamily. As to quaternary structure, homodimer.

It is found in the cytoplasm. The catalysed reaction is tRNA(Pro) + L-proline + ATP = L-prolyl-tRNA(Pro) + AMP + diphosphate. In terms of biological role, catalyzes the attachment of proline to tRNA(Pro) in a two-step reaction: proline is first activated by ATP to form Pro-AMP and then transferred to the acceptor end of tRNA(Pro). As ProRS can inadvertently accommodate and process non-cognate amino acids such as alanine and cysteine, to avoid such errors it has two additional distinct editing activities against alanine. One activity is designated as 'pretransfer' editing and involves the tRNA(Pro)-independent hydrolysis of activated Ala-AMP. The other activity is designated 'posttransfer' editing and involves deacylation of mischarged Ala-tRNA(Pro). The misacylated Cys-tRNA(Pro) is not edited by ProRS. This chain is Proline--tRNA ligase, found in Francisella tularensis subsp. holarctica (strain FTNF002-00 / FTA).